A 380-amino-acid polypeptide reads, in one-letter code: XK-related protein 9 (380 aa).

8 consecutive transmembrane segments (helical) span residues 10–30, 39–59, 81–101, 167–187, 228–248, 264–284, 294–314, and 329–349; these read LLSA…AALV, VVCA…TQVF, LPVV…GIFI, CSLV…WALV, ALLL…WLLG, SLEF…FFNV, ITYY…LFVL, and TLMA…YLLL.

The protein belongs to the XK family.

It is found in the cell membrane. It carries out the reaction a 1,2-diacyl-sn-glycero-3-phospho-L-serine(in) = a 1,2-diacyl-sn-glycero-3-phospho-L-serine(out). Its function is as follows. Phospholipid scramblase that promotes phosphatidylserine exposure on apoptotic cell surface. Phosphatidylserine is a specific marker only present at the surface of apoptotic cells and acts as a specific signal for engulfment. The sequence is that of XK-related protein 9 from Tetraodon nigroviridis (Spotted green pufferfish).